We begin with the raw amino-acid sequence, 4377 residues long: E3 ubiquitin-protein ligase HUWE1 (4377 aa).

Phosphoserine is present on residues S648 and S649. Disordered regions lie at residues 706–758, 978–1001, and 1018–1038; these read KADG…VVGT, DEKAGTTQGGKRSDGEQDGTAGSM, and TLAPMETDEPSSSDSKGKSKI. Acidic residues predominate over residues 725 to 735; that stretch reads ASSEDEEEEEV. The segment covering 737–756 has biased composition (polar residues); sequence AMQSFNSAQQNETEPNQQVV. S740 is subject to Phosphoserine. Residue S1084 is modified to Phosphoserine. A compositionally biased stretch (basic and acidic residues) spans 1291–1302; it reads LSKEKEGSRGEE. Residues 1291–1320 are disordered; sequence LSKEKEGSRGEEEAGQEEGGSRREPQVNQQ. One can recognise a UBA domain in the interval 1316–1355; that stretch reads QVNQQQLQQLMDMGFTREHAMEALLNTSTMEQATEYLLTH. Residues S1368, S1370, S1382, and S1395 each carry the phosphoserine modification. The 20-residue stretch at 1370–1389 folds into the UIM domain; the sequence is SEEDQMMRAIAMSLGQDIPM. The disordered stretch occupies residues 1396–1415; it reads PEEVACRKEEEERKAREKQE. The WWE domain maps to 1603–1680; that stretch reads RAQMTKYLQS…ETGNRRPVML (78 aa). A disordered region spans residues 1690–1733; the sequence is KNSKSSNGQELEKTLEESKETDIKHKENKGNDIPLALESTNTEK. Residues 1699–1719 are compositionally biased toward basic and acidic residues; that stretch reads ELEKTLEESKETDIKHKENKG. S1907 carries the phosphoserine modification. Disordered stretches follow at residues 2019–2065, 2262–2343, and 2355–2479; these read APAE…SKPL, SLFG…QEMQ, and LLER…ASPL. The segment covering 2022–2033 has biased composition (polar residues); the sequence is ETSTTGTSQGEA. T2035 is subject to Phosphothreonine. Residues 2037–2057 are compositionally biased toward basic and acidic residues; the sequence is EETREGKKDKEGDRTSEEGKQ. 2 stretches are compositionally biased toward low complexity: residues 2262–2271 and 2278–2291; these read SLFGSKSASS and DAQGASQDSSSHQQ. S2266 is modified (phosphoserine). An N6-acetyllysine modification is found at K2267. Acidic residues-rich tracts occupy residues 2295–2306 and 2314–2325; these read EPGEAEVQEEDH and ADGDIMDGEAET. A phosphoserine mark is found at S2362, S2365, and S2391. Polar residues predominate over residues 2388–2398; it reads SNLSQASTLQA. The span at 2408 to 2472 shows a compositional bias: acidic residues; it reads DPEDEEEHTQ…SEMELDEDYP (65 aa). A phosphoserine mark is found at S2527, S2532, and S2535. T2554 carries the post-translational modification Phosphothreonine. 3 positions are modified to phosphoserine: S2584, S2595, and S2619. Residues 2704–2716 show a composition bias toward basic and acidic residues; sequence IIDKGKEDKENRD. 3 disordered regions span residues 2704-2970, 2991-3012, and 3036-3059; these read IIDK…GVDP, IRPPTRSAPSSNSSAPAVVGNP, and QQRAEQQRRELAQNASSDTPMDPV. The segment covering 2717 to 2736 has biased composition (polar residues); it reads QSAQCTVTKTNDSTEQNVSD. Positions 2738 to 2756 are enriched in low complexity; sequence TPMPDSYPTTPSSTDAPTS. Phosphothreonine is present on T2751. Composition is skewed to polar residues over residues 2818–2835, 2847–2864, and 2877–2890; these read AETTQMELSPAPTITSLS, AVSSQLEGSPMDTSSLAS, and AGSSEQPTAGSSTP. Residues S2826, S2833, S2835, S2861, S2887, and S2888 each carry the phosphoserine modification. Residue T2889 is modified to Phosphothreonine. 2 stretches are compositionally biased toward low complexity: residues 2913 to 2932 and 2993 to 3007; these read PPEDSSPPASSESSSTRDSA and PPTRSAPSSNSSAPA. At S2918 the chain carries Phosphoserine. Phosphoserine occurs at positions 3116, 3117, 3122, 3127, and 3135. R3149 bears the Omega-N-methylarginine mark. 5 disordered regions span residues 3243-3266, 3352-3383, 3405-3429, 3471-3514, and 3539-3566; these read PKLSTSEERGKKSSKSCASSSHEN, TQQRTKETNCESDRERGSKQACSPCSSQSSSS, GKNSVKSVPVSSGGEGETSPHSLEA, SEVQ…TTPV, and TPTTATTTVSTSTTKGSKSPAKVGEGGS. A compositionally biased stretch (basic and acidic residues) spans 3355-3369; that stretch reads RTKETNCESDRERGS. Residues 3370–3383 are compositionally biased toward low complexity; that stretch reads KQACSPCSSQSSSS. Low complexity-rich tracts occupy residues 3475–3503 and 3539–3552; these read TNSSNSGSSTAATSNTSTTTTTTTTATAP and TPTTATTTVSTSTT. A phosphoserine mark is found at S3557, S3663, S3753, S3758, S3760, and S3761. Residues 3738–3759 are disordered; it reads TRRANKKAKQTGRLGSSGLGSA. The segment covering 3749–3759 has biased composition (low complexity); it reads GRLGSSGLGSA. Disordered regions lie at residues 3782 to 3850 and 3897 to 3951; these read EGQR…LPLL and RESK…SSSL. Residues 3794 to 3803 show a composition bias toward polar residues; the sequence is TSESSNQSET. Residues S3810, S3818, and S3830 each carry the phosphoserine modification. Over residues 3817–3828 the composition is skewed to polar residues; that stretch reads PSPSAQDTQSIV. T3833 is modified (phosphothreonine). Composition is skewed to basic and acidic residues over residues 3836–3845 and 3897–3918; these read GEKEKEEKPP and RESKPPVRDTRESQLAHIKDEP. Phosphoserine is present on residues S3909 and S3922. Over residues 3919-3928 the composition is skewed to pro residues; it reads PPLSPAPLTP. 2 positions are modified to phosphothreonine: T3927 and T3930. Positions 3941 to 3951 are enriched in polar residues; sequence EPSSMHISSSL. Residues 4041-4377 form the HECT domain; it reads SPEEMKNRLY…QECSEGFGLA (337 aa). Position 4274 is a phosphotyrosine (Y4274). The Glycyl thioester intermediate role is filled by C4344.

The protein belongs to the UPL family. TOM1/PTR1 subfamily. As to quaternary structure, interacts with isoform p19ARF of CDKN2A which strongly inhibits HUWE1 ubiquitin ligase activity. Interacts with MYCN, POLB and CDC6. Interacts with PA2G4. Interacts with NR1D1. Interacts with AMBRA1. Interacts with HAPSTR1. Interacts with HAPSTR2. In hepatocytes, interacts with PAQR3; the interaction promotes PPARA poylubiquitination and STUB1-mediated degradation. In terms of processing, phosphorylated on tyrosine; phosphorylation is probably required for its ability to inhibit TP53 transactivation. Widely expressed.

It localises to the cytoplasm. The protein localises to the nucleus. The protein resides in the mitochondrion. The enzyme catalyses S-ubiquitinyl-[E2 ubiquitin-conjugating enzyme]-L-cysteine + [acceptor protein]-L-lysine = [E2 ubiquitin-conjugating enzyme]-L-cysteine + N(6)-ubiquitinyl-[acceptor protein]-L-lysine.. Its pathway is protein modification; protein ubiquitination. Its function is as follows. E3 ubiquitin-protein ligase which mediates ubiquitination and subsequent proteasomal degradation of target proteins. Regulates apoptosis by catalyzing the polyubiquitination and degradation of MCL1. Mediates monoubiquitination of DNA polymerase beta (POLB) at 'Lys-41', 'Lys-61' and 'Lys-81', thereby playing a role in base-excision repair. Also ubiquitinates the p53/TP53 tumor suppressor and core histones including H1, H2A, H2B, H3 and H4. Ubiquitinates MFN2 to negatively regulate mitochondrial fusion in response to decreased stearoylation of TFRC. Ubiquitination of MFN2 also takes place following induction of mitophagy; AMBRA1 acts as a cofactor for HUWE1-mediated ubiquitination. Regulates neural differentiation and proliferation by catalyzing the polyubiquitination and degradation of MYCN. May regulate abundance of CDC6 after DNA damage by polyubiquitinating and targeting CDC6 to degradation. Mediates polyubiquitination of PA2G4. Acts in concert with MYCBP2 to regulate the circadian clock gene expression by promoting the lithium-induced ubiquination and degradation of NR1D1. Binds to an upstream initiator-like sequence in the preprodynorphin gene. Mediates HAPSTR1 degradation, but is also a required cofactor in the pathway by which HAPSTR1 governs stress signaling. Acts as a regulator of the JNK and NF-kappa-B signaling pathways by mediating assembly of heterotypic 'Lys-63'-/'Lys-48'-linked branched ubiquitin chains that are then recognized by TAB2: HUWE1 mediates branching of 'Lys-48'-linked chains of substrates initially modified with 'Lys-63'-linked conjugates by TRAF6. 'Lys-63'-/'Lys-48'-linked branched ubiquitin chains protect 'Lys-63'-linkages from CYLD deubiquitination. Ubiquitinates PPARA in hepatocytes. This Mus musculus (Mouse) protein is E3 ubiquitin-protein ligase HUWE1 (Huwe1).